A 248-amino-acid chain; its full sequence is 14-3-3 protein sigma (248 aa).

Residues S5, S74, and S248 each carry the phosphoserine modification.

Belongs to the 14-3-3 family. As to quaternary structure, homodimer. Interacts with KRT17 and SAMSN1. Found in a complex with XPO7, EIF4A1, ARHGAP1, VPS26A, VPS29 and VPS35. Interacts with GAB2. Interacts with SRPK2. Interacts with COPS6. Interacts with COP1; this interaction leads to proteasomal degradation. Interacts with the 'Thr-369' phosphorylated form of DAPK2. Interacts with PI4KB. Interacts with SLITRK1. Interacts with LRRK2; this interaction is dependent on LRRK2 phosphorylation. Interacts with PKP3 (via N-terminus); the interaction maintains the cytoplasmic pool of PKP3, facilitates PKP3 exchange at desmosomes and restricts PKP3 localization to existing desmosome cell junctions. Interacts with LCP2. Post-translationally, ubiquitinated. Ubiquitination by RFFL induces proteasomal degradation and indirectly regulates p53/TP53 activation. In terms of tissue distribution, present mainly in tissues enriched in stratified squamous keratinizing epithelium.

It localises to the cytoplasm. The protein resides in the nucleus. Its subcellular location is the secreted. Functionally, adapter protein implicated in the regulation of a large spectrum of both general and specialized signaling pathways. Binds to a large number of partners, usually by recognition of a phosphoserine or phosphothreonine motif. Binding generally results in the modulation of the activity of the binding partner. Promotes cytosolic retention of GBP1 GTPase by binding to phosphorylated GBP1, thereby inhibiting the innate immune response. Also acts as a TP53/p53-regulated inhibitor of G2/M progression. When bound to KRT17, regulates protein synthesis and epithelial cell growth by stimulating Akt/mTOR pathway. Acts to maintain desmosome cell junction adhesion in epithelial cells via interacting with and sequestering PKP3 to the cytoplasm, thereby restricting its translocation to existing desmosome structures and therefore maintaining desmosome protein homeostasis. Also acts to facilitate PKP3 exchange at desmosome plaques, thereby maintaining keratinocyte intercellular adhesion. May also regulate MDM2 autoubiquitination and degradation and thereby activate p53/TP53. The polypeptide is 14-3-3 protein sigma (SFN) (Homo sapiens (Human)).